The chain runs to 176 residues: UBA-like domain-containing protein 1 (176 aa).

Low complexity-rich tracts occupy residues glutamate 88 to threonine 105 and threonine 120 to glutamine 137. The segment at glutamate 88–arginine 176 is disordered. The span at proline 138–proline 150 shows a compositional bias: pro residues. The span at proline 166–arginine 176 shows a compositional bias: basic and acidic residues.

This sequence belongs to the UBALD family.

This chain is UBA-like domain-containing protein 1 (Ubald1), found in Rattus norvegicus (Rat).